We begin with the raw amino-acid sequence, 240 residues long: Fibronectin type III domain-containing protein 5 (240 aa).

The span at 1 to 10 shows a compositional bias: gly residues; it reads MQAARGGAGR. The interval 1–30 is disordered; the sequence is MQAARGGAGRPGREGRGLERECERSPGVGA. A compositionally biased stretch (basic and acidic residues) spans 11–24; it reads PGREGRGLERECER. Residues 64 to 155 enclose the Fibronectin type-III domain; that stretch reads APVNVTVRHL…EPVLFKTPRE (92 aa). 2 N-linked (GlcNAc...) asparagine glycosylation sites follow: asparagine 67 and asparagine 112. Residues 181-201 traverse the membrane as a helical segment; it reads GEVLIIVVVLFMWAGVIALFC. The segment covering 210–221 has biased composition (basic and acidic residues); that stretch reads NEPNNNKEKTKS. The disordered stretch occupies residues 210-240; the sequence is NEPNNNKEKTKSASETSTPEHQGGGLLRSKI. The span at 231–240 shows a compositional bias: gly residues; that stretch reads QGGGLLRSKI. A Microbody targeting signal motif is present at residues 238–240; it reads SKI.

In terms of assembly, dimer; may exist in other oligomeric forms. In terms of processing, N-Glycosylated. The extracellular domain is cleaved and released from the cell membrane.

The protein resides in the cell membrane. Its subcellular location is the peroxisome membrane. It is found in the secreted. In terms of biological role, mediates beneficial effects of muscular exercise. Induces browning of white adipose tissue by stimulating UCP1 expression, at least in part, via the nuclear receptor PPARA. The protein is Fibronectin type III domain-containing protein 5 (Fndc5) of Rattus norvegicus (Rat).